Reading from the N-terminus, the 433-residue chain is O-methyltransferase VdtC (433 aa).

Asp284 is an S-adenosyl-L-methionine binding site. His335 acts as the Proton acceptor in catalysis.

It belongs to the class I-like SAM-binding methyltransferase superfamily. Cation-independent O-methyltransferase family. COMT subfamily.

It carries out the reaction 7,9,10-trihydroxy-3-(2-oxopropyl)-1H-benzo[g]isochromen-1-one + S-adenosyl-L-methionine = 9,10-dihydroxy-7-methoxy-3-(2-oxopropyl)-1H-benzo[g]isochromen-1-one + S-adenosyl-L-homocysteine + H(+). The protein operates within secondary metabolite biosynthesis. O-methyltransferase; part of the gene cluster that mediates the biosynthesis of viriditoxin, one of the 'classical' secondary metabolites produced by fungi and that has antibacterial activity. The first step is performed by the polyketide synthase VdtA which condenses one acetyl-CoA and 6 malonyl-CoA units to form the heptaketide monomer backbone of viriditoxin. The product of VdtA is then O-methylated on C7 by the O-methyltransferase VdtC. The O-methyl group is important for the stereoselective coupling of the monomers at the final step of viriditoxin biosynthesis. The short-chain dehydrogenase/reductase VdtF then acts as a stereospecific reductase converting the pyrone to dihydropyrone via the reduction of the C3-C4 double bond. The FAD-binding monooxygenase VdtE then converts the ketone group into a methyl-ester group to yield semi-viriditoxin. Finally, the laccase VdtB is involved in dimerization of 2 semi-viriditoxin molecules to yield the final viriditoxin. VdtB is responsible for the regioselective 6,6'-coupling of semi-viriditoxin, which yields (M)-viriditoxin and (P)-viriditoxin at a ratio of 1:2. The non-catalytic carboxylesterase-like protein VdtD affects the stereochemistical outcome of the coupling. The highly reducing polyketide synthase VdtX is not involved in viriditoxin synthesis, but might possibly play a role in the production of additional metabolites not identified yet. This chain is O-methyltransferase VdtC, found in Byssochlamys spectabilis (Paecilomyces variotii).